The sequence spans 88 residues: MASQVVLSFALVVVLAVFVGQVDSCPSDCKCDYRSSQCRPANDDVHPNVCIDHYCVVMNLAKREQRPELSPGALDDSSEEKDNEASLA.

The first 24 residues, 1–24 (MASQVVLSFALVVVLAVFVGQVDS), serve as a signal peptide directing secretion. Positions 66 to 88 (RPELSPGALDDSSEEKDNEASLA) are disordered. A propeptide spanning residues 79–88 (EEKDNEASLA) is cleaved from the precursor.

Belongs to the scoloptoxin-XY family. Contains 3 disulfide bonds. As to expression, expressed by the venom gland.

The protein resides in the secreted. The protein is U-scoloptoxin(XY)-Er1b of Ethmostigmus rubripes (Giant centipede).